Consider the following 320-residue polypeptide: Formimidoylglutamase (320 aa).

Histidine 125, aspartate 153, histidine 155, aspartate 157, aspartate 244, and aspartate 246 together coordinate Mn(2+).

The protein belongs to the arginase family. It depends on Mn(2+) as a cofactor.

The catalysed reaction is N-formimidoyl-L-glutamate + H2O = formamide + L-glutamate. The protein operates within amino-acid degradation; L-histidine degradation into L-glutamate; L-glutamate from N-formimidoyl-L-glutamate (hydrolase route): step 1/1. In terms of biological role, catalyzes the conversion of N-formimidoyl-L-glutamate to L-glutamate and formamide. The protein is Formimidoylglutamase of Rhodococcus opacus (strain B4).